A 218-amino-acid chain; its full sequence is Glutathione S-transferase U22 (218 aa).

Ala2 is modified (N-acetylalanine). In terms of domain architecture, GST N-terminal spans 3–82; that stretch reads DEVILLDFWP…YIDEVWSDKN (80 aa). Residues 13–14, 39–40, 53–54, and 66–67 each bind glutathione; these read SP, DK, KI, and ES. The 121-residue stretch at 88–208 folds into the GST C-terminal domain; that stretch reads DPYQRAQARF…LHDSEKILAF (121 aa). Thr149 carries the post-translational modification Phosphothreonine.

The protein belongs to the GST superfamily. Tau family.

Its subcellular location is the cytoplasm. It localises to the cytosol. The enzyme catalyses RX + glutathione = an S-substituted glutathione + a halide anion + H(+). May be involved in the conjugation of reduced glutathione to a wide number of exogenous and endogenous hydrophobic electrophiles and have a detoxification role against certain herbicides. The protein is Glutathione S-transferase U22 (GSTU22) of Arabidopsis thaliana (Mouse-ear cress).